Consider the following 547-residue polypeptide: Chaperonin GroEL (547 aa).

ATP is bound by residues 30–33 (TLGP), K51, 87–91 (DGTTT), G415, 479–481 (NAA), and D495. The interval 526 to 547 (KKDEPTPPAAGGGMGGMGGMDF) is disordered. The segment covering 535–547 (AGGGMGGMGGMDF) has biased composition (gly residues).

The protein belongs to the chaperonin (HSP60) family. In terms of assembly, forms a cylinder of 14 subunits composed of two heptameric rings stacked back-to-back. Interacts with the co-chaperonin GroES.

It localises to the cytoplasm. It catalyses the reaction ATP + H2O + a folded polypeptide = ADP + phosphate + an unfolded polypeptide.. Its function is as follows. Together with its co-chaperonin GroES, plays an essential role in assisting protein folding. The GroEL-GroES system forms a nano-cage that allows encapsulation of the non-native substrate proteins and provides a physical environment optimized to promote and accelerate protein folding. This Xylella fastidiosa (strain M12) protein is Chaperonin GroEL.